A 682-amino-acid chain; its full sequence is Potassium-transporting ATPase ATP-binding subunit (682 aa).

4 consecutive transmembrane segments (helical) span residues 44–64, 66–86, 233–253, and 257–277; these read VMAV…SGHG, AGFG…GNFA, LTFL…GVTL, and LLIA…LPAI. Catalysis depends on Asp-310, which acts as the 4-aspartylphosphate intermediate. Residues Asp-347, Glu-351, 377–384, and Lys-395 each bind ATP; that span reads FTAQTRMS. 2 residues coordinate Mg(2+): Asp-518 and Asp-522. 3 helical membrane-spanning segments follow: residues 588–608, 616–636, and 658–678; these read FAIL…LNVM, AVLA…PLAL, and GLGG…ALVA.

This sequence belongs to the cation transport ATPase (P-type) (TC 3.A.3) family. Type IA subfamily. As to quaternary structure, the system is composed of three essential subunits: KdpA, KdpB and KdpC.

The protein resides in the cell inner membrane. The catalysed reaction is K(+)(out) + ATP + H2O = K(+)(in) + ADP + phosphate + H(+). Functionally, part of the high-affinity ATP-driven potassium transport (or Kdp) system, which catalyzes the hydrolysis of ATP coupled with the electrogenic transport of potassium into the cytoplasm. This subunit is responsible for energy coupling to the transport system and for the release of the potassium ions to the cytoplasm. This is Potassium-transporting ATPase ATP-binding subunit from Xanthomonas campestris pv. campestris (strain ATCC 33913 / DSM 3586 / NCPPB 528 / LMG 568 / P 25).